A 186-amino-acid polypeptide reads, in one-letter code: Ribosome-recycling factor (186 aa).

It belongs to the RRF family.

It localises to the cytoplasm. Functionally, responsible for the release of ribosomes from messenger RNA at the termination of protein biosynthesis. May increase the efficiency of translation by recycling ribosomes from one round of translation to another. The sequence is that of Ribosome-recycling factor from Chlorobium phaeobacteroides (strain DSM 266 / SMG 266 / 2430).